The sequence spans 117 residues: Large ribosomal subunit protein uL18 (117 aa).

This sequence belongs to the universal ribosomal protein uL18 family. Part of the 50S ribosomal subunit; part of the 5S rRNA/L5/L18/L25 subcomplex. Contacts the 5S and 23S rRNAs.

This is one of the proteins that bind and probably mediate the attachment of the 5S RNA into the large ribosomal subunit, where it forms part of the central protuberance. This is Large ribosomal subunit protein uL18 from Enterobacter sp. (strain 638).